Here is a 98-residue protein sequence, read N- to C-terminus: Large ribosomal subunit protein uL23 (98 aa).

Belongs to the universal ribosomal protein uL23 family. In terms of assembly, part of the 50S ribosomal subunit. Contacts protein L29, and trigger factor when it is bound to the ribosome.

One of the early assembly proteins it binds 23S rRNA. One of the proteins that surrounds the polypeptide exit tunnel on the outside of the ribosome. Forms the main docking site for trigger factor binding to the ribosome. This chain is Large ribosomal subunit protein uL23, found in Bordetella bronchiseptica (strain ATCC BAA-588 / NCTC 13252 / RB50) (Alcaligenes bronchisepticus).